The following is a 465-amino-acid chain: Ribulose bisphosphate carboxylase large chain (465 aa).

Lys-4 is subject to N6,N6,N6-trimethyllysine. 2 residues coordinate substrate: Asn-113 and Thr-163. Lys-165 functions as the Proton acceptor in the catalytic mechanism. Lys-167 is a binding site for substrate. Residues Lys-191, Asp-193, and Glu-194 each coordinate Mg(2+). Lys-191 is modified (N6-carboxylysine). The active-site Proton acceptor is His-284. Residues Arg-285, His-317, and Ser-369 each coordinate substrate.

This sequence belongs to the RuBisCO large chain family. Type I subfamily. Heterohexadecamer of 8 large chains and 8 small chains; disulfide-linked. The disulfide link is formed within the large subunit homodimers. It depends on Mg(2+) as a cofactor. In terms of processing, the disulfide bond which can form in the large chain dimeric partners within the hexadecamer appears to be associated with oxidative stress and protein turnover.

The protein localises to the plastid. Its subcellular location is the chloroplast. It catalyses the reaction 2 (2R)-3-phosphoglycerate + 2 H(+) = D-ribulose 1,5-bisphosphate + CO2 + H2O. It carries out the reaction D-ribulose 1,5-bisphosphate + O2 = 2-phosphoglycolate + (2R)-3-phosphoglycerate + 2 H(+). RuBisCO catalyzes two reactions: the carboxylation of D-ribulose 1,5-bisphosphate, the primary event in carbon dioxide fixation, as well as the oxidative fragmentation of the pentose substrate in the photorespiration process. Both reactions occur simultaneously and in competition at the same active site. The chain is Ribulose bisphosphate carboxylase large chain from Manilkara zapota (Sapodilla plum).